We begin with the raw amino-acid sequence, 398 residues long: Proteasome-activating nucleotidase (398 aa).

The stretch at Asp-3–Ser-60 forms a coiled coil. Residues Gly-185–Leu-190 and His-324 each bind ATP. Positions Met-396–Val-398 are docks into pockets in the proteasome alpha-ring to cause gate opening.

Belongs to the AAA ATPase family. In terms of assembly, homohexamer. The hexameric complex has a two-ring architecture resembling a top hat that caps the 20S proteasome core at one or both ends. Upon ATP-binding, the C-terminus of PAN interacts with the alpha-rings of the proteasome core by binding to the intersubunit pockets.

It is found in the cytoplasm. Its function is as follows. ATPase which is responsible for recognizing, binding, unfolding and translocation of substrate proteins into the archaeal 20S proteasome core particle. Is essential for opening the gate of the 20S proteasome via an interaction with its C-terminus, thereby allowing substrate entry and access to the site of proteolysis. Thus, the C-termini of the proteasomal ATPase function like a 'key in a lock' to induce gate opening and therefore regulate proteolysis. Unfolding activity requires energy from ATP hydrolysis, whereas ATP binding alone promotes ATPase-20S proteasome association which triggers gate opening, and supports translocation of unfolded substrates. The sequence is that of Proteasome-activating nucleotidase from Archaeoglobus fulgidus (strain ATCC 49558 / DSM 4304 / JCM 9628 / NBRC 100126 / VC-16).